The following is a 160-amino-acid chain: Glyoxalase domain-containing protein 5 (160 aa).

The region spanning 33–153 (RLDHLVLTVR…DHNLIEVSNY (121 aa)) is the VOC domain.

The protein belongs to the glyoxalase I family.

In Xenopus laevis (African clawed frog), this protein is Glyoxalase domain-containing protein 5 (glod5).